The primary structure comprises 152 residues: MIYYVIALFVIAIDQISKWLIVKNMELGTSIPIIDNVLYITSHRNRGAAWGILENKMWFFYIITVVFVVFIVFYMKKYAKTDKLLGISLGLILGGAMGNFIDRVFRQEVVDFIHVYIFSYNYPVFNIADSALCIGVVLIIIQTLLEGKKAKE.

2 consecutive transmembrane segments (helical) span residues 55-75 (NKMWFFYIITVVFVVFIVFYM) and 85-105 (LGISLGLILGGAMGNFIDRVF). Active-site residues include aspartate 111 and aspartate 129. A helical transmembrane segment spans residues 124–144 (VFNIADSALCIGVVLIIIQTL).

It belongs to the peptidase A8 family.

The protein localises to the cell membrane. The enzyme catalyses Release of signal peptides from bacterial membrane prolipoproteins. Hydrolyzes -Xaa-Yaa-Zaa-|-(S,diacylglyceryl)Cys-, in which Xaa is hydrophobic (preferably Leu), and Yaa (Ala or Ser) and Zaa (Gly or Ala) have small, neutral side chains.. The protein operates within protein modification; lipoprotein biosynthesis (signal peptide cleavage). Functionally, this protein specifically catalyzes the removal of signal peptides from prolipoproteins. The chain is Lipoprotein signal peptidase from Bacillus cereus (strain B4264).